The following is a 92-amino-acid chain: MKFEAVVRTELGKGASRRLRHAGKFPAVVYGGEEAAVAIVLNHDDIVNQMDKPEFYEGIVLVIDGAEVKVKPQDVQRHAFKPKVEHMDFIRI.

The protein belongs to the bacterial ribosomal protein bL25 family. In terms of assembly, part of the 50S ribosomal subunit; part of the 5S rRNA/L5/L18/L25 subcomplex. Contacts the 5S rRNA. Binds to the 5S rRNA independently of L5 and L18.

Functionally, this is one of the proteins that binds to the 5S RNA in the ribosome where it forms part of the central protuberance. The chain is Large ribosomal subunit protein bL25 from Vibrio campbellii (strain ATCC BAA-1116).